A 238-amino-acid polypeptide reads, in one-letter code: Ribonuclease PH (238 aa).

Phosphate contacts are provided by residues R86 and 124–126; that span reads GTR.

It belongs to the RNase PH family. In terms of assembly, homohexameric ring arranged as a trimer of dimers.

The catalysed reaction is tRNA(n+1) + phosphate = tRNA(n) + a ribonucleoside 5'-diphosphate. Functionally, phosphorolytic 3'-5' exoribonuclease that plays an important role in tRNA 3'-end maturation. Removes nucleotide residues following the 3'-CCA terminus of tRNAs; can also add nucleotides to the ends of RNA molecules by using nucleoside diphosphates as substrates, but this may not be physiologically important. Probably plays a role in initiation of 16S rRNA degradation (leading to ribosome degradation) during starvation. The protein is Ribonuclease PH of Serratia proteamaculans (strain 568).